The chain runs to 381 residues: Putative 8-amino-7-oxononanoate synthase (381 aa).

Residue arginine 20 coordinates substrate. 107-108 (GY) contacts pyridoxal 5'-phosphate. A substrate-binding site is contributed by histidine 132. Pyridoxal 5'-phosphate is bound by residues serine 180, 205–208 (DEAH), and 236–239 (TLSK). Lysine 239 carries the post-translational modification N6-(pyridoxal phosphate)lysine. A substrate-binding site is contributed by threonine 351.

Belongs to the class-II pyridoxal-phosphate-dependent aminotransferase family. BioF subfamily. In terms of assembly, homodimer. Requires pyridoxal 5'-phosphate as cofactor.

It catalyses the reaction 6-carboxyhexanoyl-[ACP] + L-alanine + H(+) = (8S)-8-amino-7-oxononanoate + holo-[ACP] + CO2. It participates in cofactor biosynthesis; biotin biosynthesis. Its function is as follows. Catalyzes the decarboxylative condensation of pimeloyl-[acyl-carrier protein] and L-alanine to produce 8-amino-7-oxononanoate (AON), [acyl-carrier protein], and carbon dioxide. The sequence is that of Putative 8-amino-7-oxononanoate synthase (bioF) from Rippkaea orientalis (strain PCC 8801 / RF-1) (Cyanothece sp. (strain PCC 8801)).